The primary structure comprises 542 residues: Probable cysteine proteinase 361L (542 aa).

Active-site residues include cysteine 172, histidine 382, and asparagine 414. The helical transmembrane segment at 520–540 (TNNWYIYALIIIFILIIFFVL) threads the bilayer.

It belongs to the peptidase C1 family.

It localises to the membrane. Probable cysteine protease. This is Probable cysteine proteinase 361L from Acheta domesticus (House cricket).